The sequence spans 380 residues: Ubiquitin-like protein 7 (380 aa).

Residues 18-98 (APKSILRLPE…VLRKSWPEPD (81 aa)) enclose the Ubiquitin-like domain. The segment at 201–313 (PMPGADSSSR…SSSVQSGTPI (113 aa)) is disordered. Position 230 is a phosphoserine (S230). 2 stretches are compositionally biased toward low complexity: residues 239-255 (SARSTPSSSTPSSRPAS) and 270-312 (SELA…SGTP). One can recognise a UBA domain in the interval 333-377 (SLQSQWQPQLQQLRDMGIQDDELSLRALQATGGDIQAALELIFAG).

Binds ubiquitin. Interacts with MAVS; this interaction enhances TRIM21-dependent 'Lys-27'-linked polyubiquitination of MAVS. Deubiquitinated by OTUD4 which stabilizes UBL7 expression.

Interferon-stimulated protein that positively regulates RNA virus-triggered innate immune signaling. Mechanistically, promotes 'Lys-27'-linked polyubiquitination of MAVS through TRIM21 leading to enhanced the IFN signaling pathway. This chain is Ubiquitin-like protein 7 (UBL7), found in Bos taurus (Bovine).